Here is a 157-residue protein sequence, read N- to C-terminus: Nucleoside deoxyribosyltransferase (157 aa).

Glu-98 (nucleophile) is an active-site residue.

Belongs to the nucleoside deoxyribosyltransferase family. Homohexamer.

The enzyme catalyses 2-deoxy-D-ribosyl-base(1) + base(2) = 2-deoxy-D-ribosyl-base(2) + base(1).. The protein operates within nucleotide metabolism; nucleotide salvage pathway. Catalyzes the cleavage of the glycosidic bond of 2'-deoxyribonucleosides and the transfer of the deoxyribosyl moiety to an acceptor purine or pyrimidine base. The sequence is that of Nucleoside deoxyribosyltransferase (ntd) from Lactobacillus leichmannii.